A 142-amino-acid polypeptide reads, in one-letter code: Large ribosomal subunit protein uL11 (142 aa).

Belongs to the universal ribosomal protein uL11 family. In terms of assembly, part of the ribosomal stalk of the 50S ribosomal subunit. Interacts with L10 and the large rRNA to form the base of the stalk. L10 forms an elongated spine to which L12 dimers bind in a sequential fashion forming a multimeric L10(L12)X complex. One or more lysine residues are methylated.

Its function is as follows. Forms part of the ribosomal stalk which helps the ribosome interact with GTP-bound translation factors. The sequence is that of Large ribosomal subunit protein uL11 from Hamiltonella defensa subsp. Acyrthosiphon pisum (strain 5AT).